The following is a 65-amino-acid chain: Alpha-conotoxin BnIA (65 aa).

Positions 1–21 (MGMRMMFTMFLLVVLATTVVS) are cleaved as a signal peptide. Residues 22–48 (FASDRASDGRNAAAKDKASDLVALTVK) constitute a propeptide that is removed on maturation. Disulfide bonds link Cys-50–Cys-56 and Cys-51–Cys-64. Positions 52–54 (SHP) are ser-Xaa-Pro motif, crucial for potent interaction with nAChR. At Cys-64 the chain carries Cysteine amide.

It belongs to the conotoxin A superfamily. Expressed by the venom duct.

Its subcellular location is the secreted. In terms of biological role, alpha-conotoxins act on postsynaptic membranes, they bind to the nicotinic acetylcholine receptors (nAChR) and thus inhibit them. This toxin inhibits acetylcholine-evoked currents reversibly in oocytes expressing the human alpha-7/CHRNA7 nAChR, and blocks nerve-evoked skeletal muscle contractions in isolated mouse neuromuscular preparations, but with a very low affinity. In Conus bandanus (Banded marble cone), this protein is Alpha-conotoxin BnIA.